The sequence spans 603 residues: Serine protease 56 (603 aa).

An N-terminal signal peptide occupies residues 1 to 19 (MLLAVLLLLPLPSSWFAHG). The disordered stretch occupies residues 64 to 96 (SHECRGSGRPRPQALLQDPPEPGPCGERRPSTA). Asparagine 97 carries an N-linked (GlcNAc...) asparagine glycan. The 233-residue stretch at 105 to 337 (IVGGSAAPPG…FKDWLQEQMS (233 aa)) folds into the Peptidase S1 domain. Cysteine 130 and cysteine 146 form a disulfide bridge. Residues histidine 145 and aspartate 191 each act as charge relay system in the active site. 3 disulfides stabilise this stretch: cysteine 225/cysteine 292, cysteine 256/cysteine 271, and cysteine 282/cysteine 313. Residue serine 286 is the Charge relay system of the active site. Disordered stretches follow at residues 442–474 (PARE…NGCP) and 573–603 (EGPW…ARQP).

This sequence belongs to the peptidase S1 family. As to expression, expressed neural retina, cornea, sclera and optic nerve.

In terms of biological role, serine protease required during eye development. This chain is Serine protease 56 (PRSS56), found in Homo sapiens (Human).